Reading from the N-terminus, the 799-residue chain is Homeobox protein engrailed (799 aa).

Disordered stretches follow at residues 189 to 331 (LPSR…DATK), 369 to 444 (GNFL…SLRQ), 554 to 664 (HPFL…DKAK), and 678 to 705 (SDRP…RTAF). The segment covering 210 to 222 (QSPSTSIRSNLVS) has biased composition (polar residues). 2 stretches are compositionally biased toward basic and acidic residues: residues 228–239 (SRRDDQETSDSC) and 246–256 (RAINDSERYDV). 2 stretches are compositionally biased toward polar residues: residues 284 to 299 (LNLT…QLFH) and 377 to 401 (HTFQ…SSPD). The span at 416–431 (ESLSSPSSSSSSSRSS) shows a compositional bias: low complexity. Composition is skewed to basic and acidic residues over residues 608–619 (DQKKRSRDESAS) and 629–648 (VHLK…EKGN). Positions 698–757 (EKRPRTAFTNDQLQRLKREFDECRYLTETRRKNLADELGLTESQIKIWFQNKRAKIKKSV) form a DNA-binding region, homeobox.

This sequence belongs to the engrailed homeobox family. In terms of tissue distribution, expressed in the dorsal ectoderm of early gastrulae in a band corresponding to the peripheral area of the presumptive shell gland. Also expressed at four points along the posterior ectoderm. In late gastrulae, it is predominantly expressed in the peripheral ectoderm of the shell gland and in spots at the posterior end behind the presumptive foot. Expressed in late trochophore larvae at four points behind the foot, at two locations at the base of the foot and in the peripheral ectoderm of the shell gland.

It localises to the nucleus. Functionally, may be involved in shell and shell gland formation during development. The polypeptide is Homeobox protein engrailed (Lymnaea stagnalis (Great pond snail)).